The primary structure comprises 227 residues: Ion-translocating oxidoreductase complex subunit E (227 aa).

The next 6 membrane-spanning stretches (helical) occupy residues 18-38, 39-59, 69-89, 93-113, 125-145, and 182-202; these read ALVQ…VTNA, LGLG…VSLV, IPVF…LMNA, GLYL…IIIG, LPAV…LVLL, and HFLL…LIAL.

It belongs to the NqrDE/RnfAE family. As to quaternary structure, the complex is composed of six subunits: RnfA, RnfB, RnfC, RnfD, RnfE and RnfG.

It is found in the cell inner membrane. In terms of biological role, part of a membrane-bound complex that couples electron transfer with translocation of ions across the membrane. In Aliivibrio fischeri (strain ATCC 700601 / ES114) (Vibrio fischeri), this protein is Ion-translocating oxidoreductase complex subunit E.